The primary structure comprises 173 residues: Thiol-disulfide oxidoreductase ResA (173 aa).

The helical; Signal-anchor for type II membrane protein transmembrane segment at 10-29 (VIILLILSGAVGFTLYQGFF) threads the bilayer. The region spanning 35–173 (MQIGKEAPNF…LEGYLKKITP (139 aa)) is the Thioredoxin domain. C73 and C76 are joined by a disulfide.

It belongs to the thioredoxin family. ResA subfamily.

It is found in the cell membrane. It participates in protein modification; cytochrome c assembly. Functionally, thiol-disulfide oxidoreductase which is required in disulfide reduction during c-type cytochrome synthesis. May accept reducing equivalents from CcdA, leading to breakage of disulfide bonds in apocytochrome c; following this reduction heme can be covalently attached. The sequence is that of Thiol-disulfide oxidoreductase ResA from Bacillus thuringiensis (strain Al Hakam).